We begin with the raw amino-acid sequence, 293 residues long: Bifunctional protein FolD (293 aa).

NADP(+) is bound by residues 164 to 166, serine 193, and threonine 234; that span reads GRS.

The protein belongs to the tetrahydrofolate dehydrogenase/cyclohydrolase family. In terms of assembly, homodimer.

The catalysed reaction is (6R)-5,10-methylene-5,6,7,8-tetrahydrofolate + NADP(+) = (6R)-5,10-methenyltetrahydrofolate + NADPH. The enzyme catalyses (6R)-5,10-methenyltetrahydrofolate + H2O = (6R)-10-formyltetrahydrofolate + H(+). The protein operates within one-carbon metabolism; tetrahydrofolate interconversion. In terms of biological role, catalyzes the oxidation of 5,10-methylenetetrahydrofolate to 5,10-methenyltetrahydrofolate and then the hydrolysis of 5,10-methenyltetrahydrofolate to 10-formyltetrahydrofolate. This chain is Bifunctional protein FolD, found in Phocaeicola vulgatus (strain ATCC 8482 / DSM 1447 / JCM 5826 / CCUG 4940 / NBRC 14291 / NCTC 11154) (Bacteroides vulgatus).